The chain runs to 358 residues: 3-dehydroquinate synthase (358 aa).

NAD(+) contacts are provided by residues 69 to 74 (DGEAHK), 103 to 107 (GVIGD), 127 to 128 (TT), Lys-140, Lys-149, and 167 to 170 (CLRT). Zn(2+)-binding residues include Glu-182, His-245, and His-262.

The protein belongs to the sugar phosphate cyclases superfamily. Dehydroquinate synthase family. The cofactor is Co(2+). It depends on Zn(2+) as a cofactor. NAD(+) is required as a cofactor.

The protein localises to the cytoplasm. It carries out the reaction 7-phospho-2-dehydro-3-deoxy-D-arabino-heptonate = 3-dehydroquinate + phosphate. The protein operates within metabolic intermediate biosynthesis; chorismate biosynthesis; chorismate from D-erythrose 4-phosphate and phosphoenolpyruvate: step 2/7. Functionally, catalyzes the conversion of 3-deoxy-D-arabino-heptulosonate 7-phosphate (DAHP) to dehydroquinate (DHQ). The chain is 3-dehydroquinate synthase from Tolumonas auensis (strain DSM 9187 / NBRC 110442 / TA 4).